We begin with the raw amino-acid sequence, 310 residues long: Olfactory receptor 5P52 (310 aa).

At 1-25 (MEAENHTTVAELIILGLTEDPKLCI) the chain is on the extracellular side. A glycan (N-linked (GlcNAc...) asparagine) is linked at Asn-5. Residues 26 to 46 (VFFVIFLGVYIITLVGNISII) traverse the membrane as a helical segment. The Cytoplasmic portion of the chain corresponds to 47 to 54 (TLIRISSQ). A helical membrane pass occupies residues 55 to 75 (LHTPMYLFLSHLAFVDIVFST). Topologically, residues 76 to 99 (SVSVIMLMELLGHGLVLSVATCAA) are extracellular. Cys-97 and Cys-189 are disulfide-bonded. The helical transmembrane segment at 100–120 (QLCMTVSFGSAECFLLAAMAY) threads the bilayer. Residues 121–133 (DRYVAICSPLLYS) are Cytoplasmic-facing. The chain crosses the membrane as a helical span at residues 134–154 (TLMSSRVCFLLLGISYVGGFV). Over 155–196 (NGWTFTGCVLSLSFCGPTQINHFFCDFSPLLKVSCSDVSIIG) the chain is Extracellular. A helical membrane pass occupies residues 197–217 (IIPSISSGSIIVVTVFVIAVS). Topologically, residues 218 to 237 (YIYILITILKMRSTEGRHKA) are cytoplasmic. The chain crosses the membrane as a helical span at residues 238 to 258 (FSTCTSHLTAVTLFYGTITVI). At 259–271 (YVMPKSSYSTEQN) the chain is on the extracellular side. Residues 272–292 (KVISLFYTVVIPMLNPLIYSL) form a helical membrane-spanning segment. The Cytoplasmic portion of the chain corresponds to 293–310 (RNRDVKDALRKAIVRVYS).

This sequence belongs to the G-protein coupled receptor 1 family.

It is found in the cell membrane. In terms of biological role, potential odorant receptor. The protein is Olfactory receptor 5P52 of Mus musculus (Mouse).